The sequence spans 297 residues: Small ribosomal subunit biogenesis GTPase RsgA (297 aa).

A CP-type G domain is found at 65 to 223; sequence INEIGRPAVA…IADTPGFSAI (159 aa). GTP contacts are provided by residues 114 to 117 and 166 to 174; these read SKSD and GQSGAGKST. Zn(2+)-binding residues include cysteine 247, cysteine 252, histidine 254, and cysteine 260.

The protein belongs to the TRAFAC class YlqF/YawG GTPase family. RsgA subfamily. Monomer. Associates with 30S ribosomal subunit, binds 16S rRNA. Zn(2+) serves as cofactor.

The protein localises to the cytoplasm. One of several proteins that assist in the late maturation steps of the functional core of the 30S ribosomal subunit. Helps release RbfA from mature subunits. May play a role in the assembly of ribosomal proteins into the subunit. Circularly permuted GTPase that catalyzes slow GTP hydrolysis, GTPase activity is stimulated by the 30S ribosomal subunit. The protein is Small ribosomal subunit biogenesis GTPase RsgA of Lactobacillus johnsonii (strain CNCM I-12250 / La1 / NCC 533).